A 273-amino-acid chain; its full sequence is Large ribosomal subunit protein uL2 (273 aa).

The interval 221 to 262 (RGTAMNPVDHPHGGGEGRNFGKHPVTPWGVQTKGKKTRHNKR) is disordered. Over residues 253–262 (KGKKTRHNKR) the composition is skewed to basic residues.

This sequence belongs to the universal ribosomal protein uL2 family. Part of the 50S ribosomal subunit. Forms a bridge to the 30S subunit in the 70S ribosome.

One of the primary rRNA binding proteins. Required for association of the 30S and 50S subunits to form the 70S ribosome, for tRNA binding and peptide bond formation. It has been suggested to have peptidyltransferase activity; this is somewhat controversial. Makes several contacts with the 16S rRNA in the 70S ribosome. The chain is Large ribosomal subunit protein uL2 from Haemophilus ducreyi (strain 35000HP / ATCC 700724).